The primary structure comprises 195 residues: Large ribosomal subunit protein mL58 (195 aa).

The transit peptide at 1 to 18 (MIGRGVCCRSFHTAGSAW) directs the protein to the mitochondrion.

This sequence belongs to the mitochondrion-specific ribosomal protein mL58 family. Component of the mitochondrial large ribosomal subunit (mt-LSU). Mature yeast 74S mitochondrial ribosomes consist of a small (37S) and a large (54S) subunit. The 37S small subunit contains a 15S ribosomal RNA (15S mt-rRNA) and 34 different proteins. The 54S large subunit contains a 21S rRNA (21S mt-rRNA) and 46 different proteins.

It localises to the mitochondrion. Component of the mitochondrial ribosome (mitoribosome), a dedicated translation machinery responsible for the synthesis of mitochondrial genome-encoded proteins, including at least some of the essential transmembrane subunits of the mitochondrial respiratory chain. The mitoribosomes are attached to the mitochondrial inner membrane and translation products are cotranslationally integrated into the membrane. This chain is Large ribosomal subunit protein mL58 (MRPL20), found in Saccharomyces cerevisiae (strain ATCC 204508 / S288c) (Baker's yeast).